We begin with the raw amino-acid sequence, 584 residues long: DNA damage-binding protein CMR1 (584 aa).

The span at 29–44 shows a compositional bias: polar residues; it reads SATDSISREIPNQRQA. Positions 29 to 90 are disordered; the sequence is SATDSISREI…TEEYQKVKEE (62 aa). Over residues 59-68 the composition is skewed to basic and acidic residues; the sequence is IKKEPQEPSR. Residues 76–110 are a coiled coil; the sequence is VTMENTEEYQKVKEEMEEAERKKKELEKLKSTRLF. WD repeat units lie at residues 226 to 267, 274 to 314, 373 to 413, 431 to 469, 506 to 549, and 553 to 584; these read ITHQ…DEDP, PHGR…SSEV, LHDK…KSNS, SSRLSVSSVDWNYENRLVCNGYDDTINIFDLSSESSELP, GRWV…LAHL, and EKVGAVPAVAAMHPIENWCVGGSASGKLYLFE.

It belongs to the WD repeat DDB2/WDR76 family.

In terms of biological role, DNA-binding protein that binds to both single- and double-stranded DNA. Binds preferentially to UV-damaged DNA. May be involved in DNA-metabolic processes. This Debaryomyces hansenii (strain ATCC 36239 / CBS 767 / BCRC 21394 / JCM 1990 / NBRC 0083 / IGC 2968) (Yeast) protein is DNA damage-binding protein CMR1.